A 344-amino-acid polypeptide reads, in one-letter code: Alkyl hydroperoxide reductase Rv2159c (344 aa).

An important for interaction with PknI region spans residues 49–50 (AG). Cysteine 84 acts as the Cysteine sulfenic acid (-SOH) intermediate in catalysis.

Belongs to the AhpD family. In terms of assembly, interacts with the serine/threonine-protein kinase PknI. The PknI-Rv2159c interaction is mediated through phosphorylation independent physical interaction.

With respect to regulation, interaction with PknI increases the peroxidase activity by several folds. Functionally, involved in protection against oxidative stresses. May play a significant role in maintaining the cellular homeostasis during stress and virulence of M.tuberculosis. In vitro, catalyzes the decomposition of cumene hydroperoxide (CHP) to acetophenone. The chain is Alkyl hydroperoxide reductase Rv2159c from Mycobacterium tuberculosis (strain ATCC 25618 / H37Rv).